A 764-amino-acid polypeptide reads, in one-letter code: Phenylalanine--tRNA ligase beta subunit (764 aa).

Residues 38–148 enclose the tRNA-binding domain; the sequence is CIAPKNVVVG…GELVLGKELN (111 aa). In terms of domain architecture, B5 spans 375 to 455; the sequence is LKDRTLTFQL…RFVGIDNLVS (81 aa). Residues D433, D439, E442, and E443 each contribute to the Mg(2+) site. The 91-residue stretch at 673–763 folds into the FDX-ACB domain; it reads SIYPSSVRDL…LEKEFNARLK (91 aa).

This sequence belongs to the phenylalanyl-tRNA synthetase beta subunit family. Type 1 subfamily. In terms of assembly, tetramer of two alpha and two beta subunits. Mg(2+) serves as cofactor.

It is found in the cytoplasm. The catalysed reaction is tRNA(Phe) + L-phenylalanine + ATP = L-phenylalanyl-tRNA(Phe) + AMP + diphosphate + H(+). In Helicobacter pylori (strain ATCC 700392 / 26695) (Campylobacter pylori), this protein is Phenylalanine--tRNA ligase beta subunit (pheT).